Consider the following 385-residue polypeptide: Acyl-CoA dehydrogenase IpdE1 (385 aa).

FAD is bound by residues 126 to 129 (QGYS) and serine 161. Glutamate 244 (proton acceptor) is an active-site residue. 364 to 366 (SNE) is a binding site for FAD.

Belongs to the acyl-CoA dehydrogenase family. Heterotetramer composed of 2 IpdE1 subunits and 2 IpdE2 subunits. It depends on FAD as a cofactor.

The catalysed reaction is 3-[(3aS,4S,5R,7aS)-5-hydroxy-7a-methyl-1-oxo-octahydro-1H-inden-4-yl]propanoyl-CoA + A = (2E)-3-[(3aS,4S,5R,7aS)-5-hydroxy-7a-methyl-1-oxo-octahydro-1H-inden-4-yl]prop-2-enoyl-CoA + AH2. It functions in the pathway steroid metabolism; cholesterol degradation. In terms of biological role, involved in cholesterol degradation. Catalyzes the dehydrogenation of 5OH-HIP-CoA to 5OH-HIPE-CoA. Can also use octanoyl-CoA and dihydroferuloyl-CoA, with lower efficiency. Cannot use 3-oxo-4-pregnene-20-carboxyl-CoA (3-OPC-CoA). The protein is Acyl-CoA dehydrogenase IpdE1 of Mycobacterium tuberculosis (strain ATCC 25618 / H37Rv).